Reading from the N-terminus, the 236-residue chain is Small ribosomal subunit protein uS2c (236 aa).

The protein belongs to the universal ribosomal protein uS2 family.

It is found in the plastid. It localises to the chloroplast. In Eucalyptus globulus subsp. globulus (Tasmanian blue gum), this protein is Small ribosomal subunit protein uS2c (rps2).